The chain runs to 535 residues: CTP synthase (535 aa).

The amidoligase domain stretch occupies residues 1–267 (MTKYIFVTGG…DKLVCEHMKL (267 aa)). Ser-13 contributes to the CTP binding site. Ser-13 lines the UTP pocket. Residue 14–19 (SLGKGI) participates in ATP binding. Residue Tyr-54 coordinates L-glutamine. Asp-71 contributes to the ATP binding site. Residues Asp-71 and Glu-141 each contribute to the Mg(2+) site. CTP-binding positions include 148 to 150 (DIE), 188 to 193 (KTKPTQ), and Lys-224. Residues 188-193 (KTKPTQ) and Lys-224 each bind UTP. A Glutamine amidotransferase type-1 domain is found at 292 to 534 (TIGLVGKYVE…IGASVEAANQ (243 aa)). Residue Gly-354 coordinates L-glutamine. Cys-381 acts as the Nucleophile; for glutamine hydrolysis in catalysis. L-glutamine is bound by residues 382 to 385 (LGMQ), Glu-405, and Arg-462. Catalysis depends on residues His-507 and Glu-509.

It belongs to the CTP synthase family. As to quaternary structure, homotetramer. Interacts with BrxC.

The enzyme catalyses UTP + L-glutamine + ATP + H2O = CTP + L-glutamate + ADP + phosphate + 2 H(+). The catalysed reaction is L-glutamine + H2O = L-glutamate + NH4(+). It catalyses the reaction UTP + NH4(+) + ATP = CTP + ADP + phosphate + 2 H(+). The protein operates within pyrimidine metabolism; CTP biosynthesis via de novo pathway; CTP from UDP: step 2/2. With respect to regulation, allosterically activated by GTP, when glutamine is the substrate; GTP has no effect on the reaction when ammonia is the substrate. The allosteric effector GTP functions by stabilizing the protein conformation that binds the tetrahedral intermediate(s) formed during glutamine hydrolysis. Inhibited by the product CTP, via allosteric rather than competitive inhibition. Functionally, catalyzes the ATP-dependent amination of UTP to CTP with either L-glutamine or ammonia as the source of nitrogen. Regulates intracellular CTP levels through interactions with the four ribonucleotide triphosphates. In Bacillus subtilis (strain 168), this protein is CTP synthase.